Here is a 259-residue protein sequence, read N- to C-terminus: Ribonuclease HII (259 aa).

Residues 70 to 258 (TLIAGIDEVG…VKSLVLGKKE (189 aa)) form the RNase H type-2 domain. A divalent metal cation is bound by residues Asp76, Glu77, and Asp168.

This sequence belongs to the RNase HII family. Requires Mn(2+) as cofactor. Mg(2+) is required as a cofactor.

It localises to the cytoplasm. The catalysed reaction is Endonucleolytic cleavage to 5'-phosphomonoester.. Functionally, endonuclease that specifically degrades the RNA of RNA-DNA hybrids. In Streptococcus pneumoniae serotype 19F (strain G54), this protein is Ribonuclease HII.